Here is a 205-residue protein sequence, read N- to C-terminus: Adenylyl-sulfate kinase (205 aa).

Residue 31–38 (GLSGAGKS) coordinates ATP. S105 functions as the Phosphoserine intermediate in the catalytic mechanism.

It belongs to the APS kinase family.

It carries out the reaction adenosine 5'-phosphosulfate + ATP = 3'-phosphoadenylyl sulfate + ADP + H(+). It functions in the pathway sulfur metabolism; hydrogen sulfide biosynthesis; sulfite from sulfate: step 2/3. In terms of biological role, catalyzes the synthesis of activated sulfate. The polypeptide is Adenylyl-sulfate kinase (Shewanella baltica (strain OS223)).